A 104-amino-acid polypeptide reads, in one-letter code: ESAT-6-like protein (104 aa).

A coiled-coil region spans residues 12–43 (MAQAAQDIEQSANAIRGMQNQLASAKDQLRSH).

This sequence belongs to the WXG100 family. CFP-10 subfamily. In terms of assembly, in isolation forms a homodimer. Forms a tight 1:1 complex with EsxA. Forms a complex with EsxA and EccC, probably wholly mediated by EsxB; binds in a pocket in the third FtsK (ATPase) domain of EccC (residues 1163-1208).

It localises to the secreted. Its function is as follows. May help regulate assembly and function of the type VII secretion system (T7SS). Binds to EccC and induces its multimerization. May serve as a chaperone for EsxA. The sequence is that of ESAT-6-like protein from Thermomonospora curvata (strain ATCC 19995 / DSM 43183 / JCM 3096 / KCTC 9072 / NBRC 15933 / NCIMB 10081 / Henssen B9).